The sequence spans 305 residues: Tyrosine recombinase XerD (305 aa).

A Core-binding (CB) domain is found at 1–83; it reads MEFISQFLEM…TIKSYYEFLI (83 aa). Residues 104 to 298 enclose the Tyr recombinase domain; it reads KLPEILSIDD…QTNHLKKALL (195 aa). Catalysis depends on residues R145, K175, H250, R253, and H276. Y285 acts as the O-(3'-phospho-DNA)-tyrosine intermediate in catalysis.

This sequence belongs to the 'phage' integrase family. XerD subfamily. Forms a cyclic heterotetrameric complex composed of two molecules of XerC and two molecules of XerD.

The protein localises to the cytoplasm. In terms of biological role, site-specific tyrosine recombinase, which acts by catalyzing the cutting and rejoining of the recombining DNA molecules. The XerC-XerD complex is essential to convert dimers of the bacterial chromosome into monomers to permit their segregation at cell division. It also contributes to the segregational stability of plasmids. The polypeptide is Tyrosine recombinase XerD (Rickettsia bellii (strain RML369-C)).